The chain runs to 405 residues: Phosphoglycerate kinase (405 aa).

Substrate is bound by residues 24–26 (DFN), R40, 63–66 (HLGR), R122, and R162. ATP is bound by residues K213, E332, and 361-364 (GGDS).

Belongs to the phosphoglycerate kinase family. In terms of assembly, monomer.

The protein localises to the cytoplasm. It catalyses the reaction (2R)-3-phosphoglycerate + ATP = (2R)-3-phospho-glyceroyl phosphate + ADP. It participates in carbohydrate degradation; glycolysis; pyruvate from D-glyceraldehyde 3-phosphate: step 2/5. The sequence is that of Phosphoglycerate kinase from Corynebacterium diphtheriae (strain ATCC 700971 / NCTC 13129 / Biotype gravis).